We begin with the raw amino-acid sequence, 295 residues long: Acetylglutamate kinase (295 aa).

Residues 67–68 (GG), Arg-89, and Asn-191 each bind substrate.

The protein belongs to the acetylglutamate kinase family. ArgB subfamily.

The protein resides in the cytoplasm. The catalysed reaction is N-acetyl-L-glutamate + ATP = N-acetyl-L-glutamyl 5-phosphate + ADP. It participates in amino-acid biosynthesis; L-arginine biosynthesis; N(2)-acetyl-L-ornithine from L-glutamate: step 2/4. Its function is as follows. Catalyzes the ATP-dependent phosphorylation of N-acetyl-L-glutamate. The chain is Acetylglutamate kinase from Nitrosomonas eutropha (strain DSM 101675 / C91 / Nm57).